The chain runs to 470 residues: Membrane-bound lytic murein transglycosylase F (470 aa).

The first 24 residues, 1-24 (MPSLKTKGAAGKFASLLLVLALSA), serve as a signal peptide directing secretion. Residues 25–262 (CSRPAPPPET…RALERYFGHV (238 aa)) are non-LT domain. The segment at 263–470 (KRLGSSDILG…RGEDGLPPPG (208 aa)) is LT domain. Residue glutamate 309 is part of the active site.

This sequence in the N-terminal section; belongs to the bacterial solute-binding protein 3 family. It in the C-terminal section; belongs to the transglycosylase Slt family.

The protein localises to the cell outer membrane. It catalyses the reaction Exolytic cleavage of the (1-&gt;4)-beta-glycosidic linkage between N-acetylmuramic acid (MurNAc) and N-acetylglucosamine (GlcNAc) residues in peptidoglycan, from either the reducing or the non-reducing ends of the peptidoglycan chains, with concomitant formation of a 1,6-anhydrobond in the MurNAc residue.. In terms of biological role, murein-degrading enzyme that degrades murein glycan strands and insoluble, high-molecular weight murein sacculi, with the concomitant formation of a 1,6-anhydromuramoyl product. Lytic transglycosylases (LTs) play an integral role in the metabolism of the peptidoglycan (PG) sacculus. Their lytic action creates space within the PG sacculus to allow for its expansion as well as for the insertion of various structures such as secretion systems and flagella. In Thiobacillus denitrificans (strain ATCC 25259 / T1), this protein is Membrane-bound lytic murein transglycosylase F.